The primary structure comprises 424 residues: Cyclin-dependent kinase D-1 (424 aa).

Residues 19-299 enclose the Protein kinase domain; sequence YLKREVLGEG…AQQALEHRYF (281 aa). Residues 25–33 and Lys48 contribute to the ATP site; that span reads LGEGTYGVV. Thr29 bears the Phosphothreonine mark. Phosphotyrosine is present on Tyr30. Residue Asp141 is the Proton acceptor of the active site. Ser168 is modified (phosphoserine). Thr174 carries the post-translational modification Phosphothreonine. 2 disordered regions span residues 303–337 and 359–424; these read PAPTKPSQLPRPPPKGDSGNNKIPDLNLQDGPVVL and ADRT…GYTE. A compositionally biased stretch (basic and acidic residues) spans 359 to 374; it reads ADRTEEHPSGARHMDD.

It belongs to the protein kinase superfamily. CMGC Ser/Thr protein kinase family. CDC2/CDKX subfamily.

Its subcellular location is the nucleus. The catalysed reaction is L-seryl-[protein] + ATP = O-phospho-L-seryl-[protein] + ADP + H(+). It catalyses the reaction L-threonyl-[protein] + ATP = O-phospho-L-threonyl-[protein] + ADP + H(+). The enzyme catalyses [DNA-directed RNA polymerase] + ATP = phospho-[DNA-directed RNA polymerase] + ADP + H(+). This chain is Cyclin-dependent kinase D-1 (CDKD-1), found in Oryza sativa subsp. indica (Rice).